A 226-amino-acid polypeptide reads, in one-letter code: UPF0173 metal-dependent hydrolase TM_1162 (226 aa).

Belongs to the UPF0173 family.

This chain is UPF0173 metal-dependent hydrolase TM_1162, found in Thermotoga maritima (strain ATCC 43589 / DSM 3109 / JCM 10099 / NBRC 100826 / MSB8).